Here is a 182-residue protein sequence, read N- to C-terminus: Translation initiation factor IF-3 (182 aa).

This sequence belongs to the IF-3 family. Monomer.

The protein localises to the cytoplasm. Functionally, IF-3 binds to the 30S ribosomal subunit and shifts the equilibrium between 70S ribosomes and their 50S and 30S subunits in favor of the free subunits, thus enhancing the availability of 30S subunits on which protein synthesis initiation begins. This Tropheryma whipplei (strain TW08/27) (Whipple's bacillus) protein is Translation initiation factor IF-3.